Reading from the N-terminus, the 185-residue chain is NADH-quinone oxidoreductase subunit B (185 aa).

Residues cysteine 38, cysteine 39, cysteine 104, and cysteine 133 each coordinate [4Fe-4S] cluster.

The protein belongs to the complex I 20 kDa subunit family. In terms of assembly, NDH-1 is composed of 14 different subunits. Subunits NuoB, C, D, E, F, and G constitute the peripheral sector of the complex. [4Fe-4S] cluster serves as cofactor.

It is found in the cell membrane. The enzyme catalyses a quinone + NADH + 5 H(+)(in) = a quinol + NAD(+) + 4 H(+)(out). Functionally, NDH-1 shuttles electrons from NADH, via FMN and iron-sulfur (Fe-S) centers, to quinones in the respiratory chain. The immediate electron acceptor for the enzyme in this species is believed to be a menaquinone. Couples the redox reaction to proton translocation (for every two electrons transferred, four hydrogen ions are translocated across the cytoplasmic membrane), and thus conserves the redox energy in a proton gradient. The polypeptide is NADH-quinone oxidoreductase subunit B (Cutibacterium acnes (strain DSM 16379 / KPA171202) (Propionibacterium acnes)).